The primary structure comprises 68 residues: MGMRMMFIMFMLVVLATTVDTFTSDRALDAMNAAASNKASRLIALAVRGCCARAACAGIHQELCGGRR.

A signal peptide spans Met1–Thr21. Positions Phe22–Arg48 are excised as a propeptide. 2 disulfides stabilise this stretch: Cys50–Cys56 and Cys51–Cys64. The segment at Ala52–Ala54 is lacks the Ser-Xaa-Pro motif that is crucial for potent interaction with nAChR. The residue at position 65 (Gly65) is a Glycine amide.

Belongs to the conotoxin A superfamily. In terms of tissue distribution, expressed by the venom duct.

It is found in the secreted. Functionally, alpha-conotoxins act on postsynaptic membranes, they bind to the nicotinic acetylcholine receptors (nAChR) and thus inhibit them. Has a distinct nAChR binding mode from other alpha-conotoxins, due to a different three residue motif (Ala-Xaa-Ala instead of the conserved Ser-Xaa-Pro motif). In Conus litteratus (Lettered cone), this protein is Alpha-conotoxin-like Lt1.2.